The primary structure comprises 750 residues: Catalase A (750 aa).

A disordered region spans residues E30 to R49. Residues H93 and N166 contribute to the active site. Y380 serves as a coordination point for heme.

Belongs to the catalase family. Heme serves as cofactor.

It is found in the peroxisome matrix. It carries out the reaction 2 H2O2 = O2 + 2 H2O. In terms of biological role, catalyzes the degradation of hydrogen peroxide (H(2)O(2)) generated by peroxisomal oxidases to water and oxygen, thereby protecting cells from the toxic effects of hydrogen peroxide. This Aspergillus fumigatus (strain ATCC MYA-4609 / CBS 101355 / FGSC A1100 / Af293) (Neosartorya fumigata) protein is Catalase A (catA).